The chain runs to 131 residues: Global transcriptional regulator Spx 1 (131 aa).

A disulfide bond links Cys-10 and Cys-13.

The protein belongs to the ArsC family. Spx subfamily. As to quaternary structure, interacts with the C-terminal domain of the alpha subunit of the RNAP.

Its subcellular location is the cytoplasm. In terms of biological role, global transcriptional regulator that plays a key role in stress response and exerts either positive or negative regulation of genes. Acts by interacting with the C-terminal domain of the alpha subunit of the RNA polymerase (RNAP). This interaction can enhance binding of RNAP to the promoter region of target genes and stimulate their transcription, or block interaction of RNAP with activator. The sequence is that of Global transcriptional regulator Spx 1 from Oceanobacillus iheyensis (strain DSM 14371 / CIP 107618 / JCM 11309 / KCTC 3954 / HTE831).